The primary structure comprises 304 residues: ATP phosphoribosyltransferase (304 aa).

It belongs to the ATP phosphoribosyltransferase family. Long subfamily. Mg(2+) is required as a cofactor.

It localises to the cytoplasm. The enzyme catalyses 1-(5-phospho-beta-D-ribosyl)-ATP + diphosphate = 5-phospho-alpha-D-ribose 1-diphosphate + ATP. It functions in the pathway amino-acid biosynthesis; L-histidine biosynthesis; L-histidine from 5-phospho-alpha-D-ribose 1-diphosphate: step 1/9. With respect to regulation, feedback inhibited by histidine. In terms of biological role, catalyzes the condensation of ATP and 5-phosphoribose 1-diphosphate to form N'-(5'-phosphoribosyl)-ATP (PR-ATP). Has a crucial role in the pathway because the rate of histidine biosynthesis seems to be controlled primarily by regulation of HisG enzymatic activity. The sequence is that of ATP phosphoribosyltransferase from Xanthomonas euvesicatoria pv. vesicatoria (strain 85-10) (Xanthomonas campestris pv. vesicatoria).